Reading from the N-terminus, the 102-residue chain is uncharacterized protein (102 aa).

This is an uncharacterized protein from Saccharomyces cerevisiae (strain ATCC 204508 / S288c) (Baker's yeast).